A 369-amino-acid polypeptide reads, in one-letter code: Guanine nucleotide-binding protein subunit beta-2 (369 aa).

Over residues 1-24 (MSTIAGESSSSSKMPENSQPTTTE) the composition is skewed to polar residues. Positions 1 to 28 (MSTIAGESSSSSKMPENSQPTTTEKGSE) are disordered. WD repeat units lie at residues 79–109 (GHVG…IVWD), 121–151 (MPTT…SVVP), 167–197 (THTS…AIWD), 209–241 (GHTG…LVWD), 253–283 (GHEA…RLFD), 297–327 (SILF…GVWD), and 339–369 (GHEN…RIWA).

This sequence belongs to the WD repeat G protein beta family. G proteins are composed of 3 units, alpha, beta and gamma. Interacts with G protein gamma subunits gpc-1 and gpc-2 and with egl-10 and eat-16.

Guanine nucleotide-binding proteins (G proteins) are involved as a modulator or transducer in various transmembrane signaling systems. The beta and gamma chains are required for the GTPase activity, for replacement of GDP by GTP, and for G protein-effector interaction. Plays a role in regulating dopamine-mediated locomotion behavior. The sequence is that of Guanine nucleotide-binding protein subunit beta-2 from Caenorhabditis elegans.